The primary structure comprises 548 residues: Rhotekin (548 aa).

Positions 10–85 constitute an REM-1 domain; it reads DLNMLYIRQM…LQRRKEAQVL (76 aa). 2 positions are modified to phosphoserine: Ser22 and Ser93. Residues 83 to 103 are disordered; it reads QVLGKTGRRPSDSVQPPERSP. Arg217 bears the Asymmetric dimethylarginine mark. The residue at position 219 (Ser219) is a Phosphoserine. In terms of domain architecture, PH spans 296–403; it reads QPTASGTLRV…WMEALWQLFL (108 aa). A phosphoserine mark is found at Ser504, Ser513, and Ser528. The disordered stretch occupies residues 506–548; sequence DAVPADHSLGPSRSVAPLPPQRSPQSRGFYSKSQLSTWLQSPV. Residues 528–548 show a composition bias toward polar residues; the sequence is SPQSRGFYSKSQLSTWLQSPV.

As to quaternary structure, interacts via its C-terminal region with the TAX1BP3 PDZ domain. This interaction facilitates Rho-mediated activation of the c-Fos serum response element (SRE). Interacts with SEPT9. Specifically binds to GTP-bound RHOA, RHOB and RHOC and inhibits their GTPase activity.

Its function is as follows. Mediates Rho signaling to activate NF-kappa-B and may confer increased resistance to apoptosis to cells in gastric tumorigenesis. May play a novel role in the organization of septin structures. The chain is Rhotekin from Rattus norvegicus (Rat).